A 184-amino-acid polypeptide reads, in one-letter code: Uroplakin-2 (184 aa).

A signal peptide spans 1–25 (MASTLPVQTLPLILILLAVLAPGTA). A propeptide spanning residues 26–84 (DFNISSLSGLLSPALTESLLIALPPCHLTGGNATLMVRRANDSKVVKSDFVVPPCRGRR) is cleaved from the precursor. 3 N-linked (GlcNAc...) asparagine glycosylation sites follow: Asn-28, Asn-57, and Asn-66. Topologically, residues 85–155 (ELVSVVDSGS…IGLGMARTGG (71 aa)) are lumenal. A helical transmembrane segment spans residues 156 to 180 (MVVITVLLSVAMFLLVVGLIVALHW). The Cytoplasmic portion of the chain corresponds to 181–184 (DARK).

It belongs to the uroplakin-2 family. As to quaternary structure, interacts with uroplakin-1a (UPK1A).

The protein localises to the cell membrane. Component of the asymmetric unit membrane (AUM); a highly specialized biomembrane elaborated by terminally differentiated urothelial cells. May play an important role in regulating the assembly of the AUM. This Mus musculus (Mouse) protein is Uroplakin-2 (Upk2).